A 472-amino-acid chain; its full sequence is Type I restriction enzyme BthVORF4518P methylase subunit (472 aa).

S-adenosyl-L-methionine contacts are provided by residues 151–156, 181–183, Asp-214, and 243–244; these read QYFTPR, TGG, and DS.

This sequence belongs to the N(4)/N(6)-methyltransferase family. As to quaternary structure, the type I restriction/modification system is composed of three polypeptides R, M and S; the restriction enzyme has stoichiometry R(2)M(2)S(1) while the methyltransferase is M(2)S(1).

It carries out the reaction a 2'-deoxyadenosine in DNA + S-adenosyl-L-methionine = an N(6)-methyl-2'-deoxyadenosine in DNA + S-adenosyl-L-homocysteine + H(+). The subtype gamma methyltransferase (M) subunit of a type I restriction enzyme. The M and S subunits together form a methyltransferase (MTase) that methylates two adenine residues of an undetermined sequence. In the presence of the R subunit the complex can also act as an endonuclease, binding to the same target sequence but cutting the DNA some distance from this site. Whether the DNA is cut or modified depends on the methylation state of the target sequence. When the target site is unmodified, the DNA is cut. When the target site is hemimethylated, the complex acts as a maintenance MTase modifying the DNA so that both strands become methylated. After locating a non-methylated recognition site, the enzyme complex serves as a molecular motor that translocates DNA in an ATP-dependent manner until a collision occurs that triggers cleavage. This chain is Type I restriction enzyme BthVORF4518P methylase subunit, found in Bacteroides thetaiotaomicron (strain ATCC 29148 / DSM 2079 / JCM 5827 / CCUG 10774 / NCTC 10582 / VPI-5482 / E50).